We begin with the raw amino-acid sequence, 880 residues long: Probable receptor-like protein kinase At5g38990 (880 aa).

Residues methionine 1–alanine 21 form the signal peptide. At serine 22–proline 440 the chain is on the extracellular side. Residues asparagine 46, asparagine 136, asparagine 158, asparagine 210, asparagine 256, asparagine 263, asparagine 297, and asparagine 324 are each glycosylated (N-linked (GlcNAc...) asparagine). A helical membrane pass occupies residues isoleucine 441–leucine 461. Residues valine 462–arginine 880 are Cytoplasmic-facing. Positions asparagine 471–leucine 505 are disordered. 2 stretches are compositionally biased toward polar residues: residues glutamate 472–tryptophan 487 and threonine 494–leucine 505. In terms of domain architecture, Protein kinase spans phenylalanine 525–alanine 810. ATP-binding positions include isoleucine 531–valine 539 and lysine 554. Aspartate 653 serves as the catalytic Proton acceptor. Positions leucine 820–valine 846 are disordered.

It belongs to the protein kinase superfamily. Ser/Thr protein kinase family.

The protein resides in the membrane. The protein is Probable receptor-like protein kinase At5g38990 of Arabidopsis thaliana (Mouse-ear cress).